The sequence spans 421 residues: Phosphoribosylamine--glycine ligase (421 aa).

The region spanning K108 to M314 is the ATP-grasp domain. I134–S195 serves as a coordination point for ATP. The Mg(2+) site is built by E284 and N286.

This sequence belongs to the GARS family. Requires Mg(2+) as cofactor. The cofactor is Mn(2+).

It catalyses the reaction 5-phospho-beta-D-ribosylamine + glycine + ATP = N(1)-(5-phospho-beta-D-ribosyl)glycinamide + ADP + phosphate + H(+). The protein operates within purine metabolism; IMP biosynthesis via de novo pathway; N(1)-(5-phospho-D-ribosyl)glycinamide from 5-phospho-alpha-D-ribose 1-diphosphate: step 2/2. The chain is Phosphoribosylamine--glycine ligase from Streptococcus pyogenes serotype M6 (strain ATCC BAA-946 / MGAS10394).